The primary structure comprises 115 residues: Succinate dehydrogenase assembly factor 3, mitochondrial (115 aa).

The protein belongs to the complex I LYR family. SDHAF3 subfamily. In terms of assembly, interacts with the iron-sulfur protein subunit within the SDH catalytic dimer.

The protein resides in the mitochondrion matrix. Functionally, plays an essential role in the assembly of succinate dehydrogenase (SDH), an enzyme complex (also referred to as respiratory complex II) that is a component of both the tricarboxylic acid (TCA) cycle and the mitochondrial electron transport chain, and which couples the oxidation of succinate to fumarate with the reduction of ubiquinone (coenzyme Q) to ubiquinol. Promotes maturation of the iron-sulfur protein subunit of the SDH catalytic dimer, protecting it from the deleterious effects of oxidants. May act together with SDHAF1. This chain is Succinate dehydrogenase assembly factor 3, mitochondrial (acn9), found in Nematostella vectensis (Starlet sea anemone).